We begin with the raw amino-acid sequence, 252 residues long: Curing of [URE3] protein 1 (252 aa).

Its subcellular location is the nucleus. In terms of biological role, involved in the curing of prion [URE3]. Nuclear localization of this protein may suggest a role in transcription regulation, so it might exert an effect on [URE3] through known prion-curing chaperones or BTN2. The protein is Curing of [URE3] protein 1 (CUR1) of Saccharomyces cerevisiae (strain ATCC 204508 / S288c) (Baker's yeast).